We begin with the raw amino-acid sequence, 431 residues long: Serine/threonine-protein kinase Sgk1 (431 aa).

The segment at 1–60 (MTVKTEAARGPLTYSRMRGMVAILIAFMKQRRMGLNDFIQKIANNSYACKHTEVQSILKI) is necessary for localization to the mitochondria. The segment at 66–92 (PELMNANPSPPPSPSQQINLGPSSNPH) is disordered. A Phosphoserine modification is found at Ser-74. Ser-78 is subject to Phosphoserine; by MAPK7. Residues 81 to 91 (QQINLGPSSNP) are compositionally biased toward polar residues. The region spanning 98-355 (FHFLKVIGKG…FMEIRNHVFF (258 aa)) is the Protein kinase domain. Residues 104–112 (IGKGSFGKV) and Lys-127 each bind ATP. A Nuclear localization signal motif is present at residues 131–141 (KKAILKKKEEK). Residue Asp-222 is the Proton acceptor of the active site. At Thr-256 the chain carries Phosphothreonine; by PDPK1. The region spanning 356–431 (SLINWDDLIN…SYAPPMDSFL (76 aa)) is the AGC-kinase C-terminal domain. Thr-369 is modified (phosphothreonine; by PKA). Phosphoserine is present on residues Ser-397, Ser-401, and Ser-422.

This sequence belongs to the protein kinase superfamily. AGC Ser/Thr protein kinase family. Homodimer; disulfide-linked. Forms a trimeric complex with FBXW7 and NOTCH1. Interacts with MAPK3/ERK1, MAPK1/ERK2, MAP2K1/MEK1, MAP2K2/MEK2, NEDD4, NEDD4L, MAPT/TAU, MAPK7, CREB1, SLC9A3R2/NHERF2 and KCNJ1/ROMK1. Associates with the mammalian target of rapamycin complex 2 (mTORC2) via an interaction with MAPKAP1/SIN1. Regulated by phosphorylation. Activated by phosphorylation on Ser-422 by mTORC2, transforming it into a substrate for PDPK1 which phosphorylates it on Thr-256. Phosphorylation on Ser-397 and Ser-401 are also essential for its activity. Phosphorylation on Ser-78 by MAPK7 is required for growth factor-induced cell cycle progression. In terms of processing, ubiquitinated by NEDD4L; which promotes proteasomal degradation. Ubiquitinated by SYVN1 at the endoplasmic reticulum; which promotes rapid proteasomal degradation and maintains a high turnover rate in resting cells.

The protein localises to the cytoplasm. It is found in the nucleus. The protein resides in the endoplasmic reticulum membrane. It localises to the cell membrane. Its subcellular location is the mitochondrion. The enzyme catalyses L-seryl-[protein] + ATP = O-phospho-L-seryl-[protein] + ADP + H(+). It catalyses the reaction L-threonyl-[protein] + ATP = O-phospho-L-threonyl-[protein] + ADP + H(+). Its activity is regulated as follows. Two specific sites, one in the kinase domain (Thr-256) and the other in the C-terminal regulatory region (Ser-422), need to be phosphorylated for its full activation. Phosphorylation at Ser-397 and Ser-401 are also essential for its activity. Activated by WNK1, WNK2, WNK3 and WNK4; which promote phosphorylation by mTORC2. In terms of biological role, serine/threonine-protein kinase which is involved in the regulation of a wide variety of ion channels, membrane transporters, cellular enzymes, transcription factors, neuronal excitability, cell growth, proliferation, survival, migration and apoptosis. Plays an important role in cellular stress response. Contributes to regulation of renal Na(+) retention, renal K(+) elimination, salt appetite, gastric acid secretion, intestinal Na(+)/H(+) exchange and nutrient transport, insulin-dependent salt sensitivity of blood pressure, salt sensitivity of peripheral glucose uptake, cardiac repolarization and memory consolidation. Up-regulates Na(+) channels: SCNN1A/ENAC, SCN5A and ASIC1/ACCN2, K(+) channels: KCNJ1/ROMK1, KCNA1-5, KCNQ1-5 and KCNE1, epithelial Ca(2+) channels: TRPV5 and TRPV6, chloride channels: BSND, CLCN2 and CFTR, glutamate transporters: SLC1A3/EAAT1, SLC1A2 /EAAT2, SLC1A1/EAAT3, SLC1A6/EAAT4 and SLC1A7/EAAT5, amino acid transporters: SLC1A5/ASCT2, SLC38A1/SN1 and SLC6A19, creatine transporter: SLC6A8, Na(+)/dicarboxylate cotransporter: SLC13A2/NADC1, Na(+)-dependent phosphate cotransporter: SLC34A2/NAPI-2B, glutamate receptor: GRIK2/GLUR6. Up-regulates carriers: SLC9A3/NHE3, SLC12A1/NKCC2, SLC12A3/NCC, SLC5A3/SMIT, SLC2A1/GLUT1, SLC5A1/SGLT1 and SLC15A2/PEPT2. Regulates enzymes: GSK3A/B, PMM2 and Na(+)/K(+) ATPase, and transcription factors: CTNNB1 and nuclear factor NF-kappa-B. Stimulates sodium transport into epithelial cells by enhancing the stability and expression of SCNN1A/ENAC. This is achieved by phosphorylating the NEDD4L ubiquitin E3 ligase, promoting its interaction with 14-3-3 proteins, thereby preventing it from binding to SCNN1A/ENAC and targeting it for degradation. Regulates store-operated Ca(+2) entry (SOCE) by stimulating ORAI1 and STIM1. Regulates KCNJ1/ROMK1 directly via its phosphorylation or indirectly via increased interaction with SLC9A3R2/NHERF2. Phosphorylates MDM2 and activates MDM2-dependent ubiquitination of p53/TP53. Phosphorylates MAPT/TAU and mediates microtubule depolymerization and neurite formation in hippocampal neurons. Phosphorylates SLC2A4/GLUT4 and up-regulates its activity. Phosphorylates APBB1/FE65 and promotes its localization to the nucleus. Phosphorylates MAPK1/ERK2 and activates it by enhancing its interaction with MAP2K1/MEK1 and MAP2K2/MEK2. Phosphorylates FBXW7 and plays an inhibitory role in the NOTCH1 signaling. Phosphorylates FOXO1 resulting in its relocalization from the nucleus to the cytoplasm. Phosphorylates FOXO3, promoting its exit from the nucleus and interference with FOXO3-dependent transcription. Phosphorylates BRAF and MAP3K3/MEKK3 and inhibits their activity. Phosphorylates SLC9A3/NHE3 in response to dexamethasone, resulting in its activation and increased localization at the cell membrane. Phosphorylates CREB1. Necessary for vascular remodeling during angiogenesis. The sequence is that of Serine/threonine-protein kinase Sgk1 (SGK1) from Oryctolagus cuniculus (Rabbit).